We begin with the raw amino-acid sequence, 210 residues long: Thymidylate kinase (210 aa).

An ATP-binding site is contributed by 10 to 17 (GPEGAGKS).

The protein belongs to the thymidylate kinase family.

The catalysed reaction is dTMP + ATP = dTDP + ADP. Phosphorylation of dTMP to form dTDP in both de novo and salvage pathways of dTTP synthesis. This chain is Thymidylate kinase, found in Pseudomonas putida (strain GB-1).